Reading from the N-terminus, the 367-residue chain is Indole glucosinolate O-methyltransferase 5 (367 aa).

Positions 209, 232, 252, 253, and 266 each coordinate S-adenosyl-L-homocysteine. The active-site Proton acceptor is the histidine 270.

This sequence belongs to the class I-like SAM-binding methyltransferase superfamily. Cation-independent O-methyltransferase family.

It participates in secondary metabolite biosynthesis. Involved in indole glucosinolate biosynthesis. Catalyzes methoxylation reactions of the glucosinolate indole ring. Converts the hydroxy intermediates 4-hydroxy-indol-3-yl-methylglucosinolate (4OH-I3M) and 1-hydroxy-indol-3-yl-methylglucosinolate (1OH-I3M) to 4-methoxy-indol-3-yl-methylglucosinolate (4MO-I3M) and 1-methoxy-indol-3-yl-methylglucosinolate, respectively. The chain is Indole glucosinolate O-methyltransferase 5 from Arabidopsis thaliana (Mouse-ear cress).